We begin with the raw amino-acid sequence, 644 residues long: DNA mismatch repair protein MutL (644 aa).

Residues 363–405 (GTFNPFTDDKTNQHYTKAGSGSGSGYSSGSSSSSGSGSGSSYS) form a disordered region. Residues 389 to 405 (SSGSSSSSGSGSGSSYS) show a composition bias toward low complexity.

It belongs to the DNA mismatch repair MutL/HexB family.

Functionally, this protein is involved in the repair of mismatches in DNA. It is required for dam-dependent methyl-directed DNA mismatch repair. May act as a 'molecular matchmaker', a protein that promotes the formation of a stable complex between two or more DNA-binding proteins in an ATP-dependent manner without itself being part of a final effector complex. This chain is DNA mismatch repair protein MutL, found in Flavobacterium johnsoniae (strain ATCC 17061 / DSM 2064 / JCM 8514 / BCRC 14874 / CCUG 350202 / NBRC 14942 / NCIMB 11054 / UW101) (Cytophaga johnsonae).